A 481-amino-acid polypeptide reads, in one-letter code: UDP-glucose 6-dehydrogenase 1 (481 aa).

NAD(+) contacts are provided by residues 8 to 13 (GAGYVG), D33, R38, 86 to 90 (VNTPT), 127 to 128 (ST), and E161. Substrate-binding positions include 157-161 (EFLAE), 216-223 (KLAANAFL), and 256-269 (RIGP…VGFG). The Nucleophile role is filled by C272. 272–275 (CFQK) contacts NAD(+). 334–335 (FK) lines the substrate pocket. R342 provides a ligand contact to NAD(+). R448 is a binding site for substrate.

Belongs to the UDP-glucose/GDP-mannose dehydrogenase family.

It carries out the reaction UDP-alpha-D-glucose + 2 NAD(+) + H2O = UDP-alpha-D-glucuronate + 2 NADH + 3 H(+). Its pathway is nucleotide-sugar biosynthesis; UDP-alpha-D-glucuronate biosynthesis; UDP-alpha-D-glucuronate from UDP-alpha-D-glucose: step 1/1. Its activity is regulated as follows. Inhibited by UDP-xylose. Involved in the biosynthesis of UDP-glucuronic acid (UDP-GlcA), providing nucleotide sugars for cell-wall polymers. This is UDP-glucose 6-dehydrogenase 1 (UGD1) from Arabidopsis thaliana (Mouse-ear cress).